Here is a 435-residue protein sequence, read N- to C-terminus: DMATS-type prenyltransferase fscG (435 aa).

8 residues coordinate dimethylallyl diphosphate: Arg111, Lys193, Tyr195, Arg259, Lys261, Tyr263, Tyr352, and Tyr423.

It belongs to the tryptophan dimethylallyltransferase family.

It participates in secondary metabolite biosynthesis. Functionally, DMATS-type prenyltransferase; part of the fragmented gene cluster that mediates the biosynthesis of fusarochromene, a tryptophan-derived metabolite closely related to a group of mycotoxins including fusarochromanone. Within the pathway, fscG catalyzes the prenylation of the primary alcohol produced by fscA which is necessary for the formation of the chromene ring by the oxidoreductase fscI. The first step of the pathway is the epimerization of L-tryptophan to D-tryptophan in the presence of the NRPS-like tryptophan epimerase fscC. D-tryptophan is subsequently hydroxylated by the tryptophan 6-hydroxylase fscE to yield 6-hydroxytryptophan. The pyrrole ring undergoes cleavaged by the tryptophan 2,3-dioxygenase fscD and is finally converted to 4-hydroxykyrunenine by the hydrolase fscH. The NRPS-like oxidoreductase fscA reduces the carboxyl group to primary alcohol and the DMATS-type prenyltransferase fscG performs prenylation, followed by the formation of a chromene ring catalyzed by the oxidoreductase fscI, which leads to desacetylfusarochromene. Epoxidation by fscF and rearrangement reactions of chromene double bonds convert compound desacetylfusarochromene to fusarochromanones. Although specific acetyltransferases were not found near the fsc gene cluster, several predicted enzymes containing the N-acetyltransferase superfamily domain are present in the genome of F.equiseti. These predicted enzymes may have the potential to convert desacetylfusarochromene to fusarochromene. The chain is DMATS-type prenyltransferase fscG from Fusarium equiseti (Fusarium scirpi).